A 618-amino-acid chain; its full sequence is Proline--tRNA ligase (618 aa).

The protein belongs to the class-II aminoacyl-tRNA synthetase family. ProS type 1 subfamily. As to quaternary structure, homodimer.

Its subcellular location is the cytoplasm. It carries out the reaction tRNA(Pro) + L-proline + ATP = L-prolyl-tRNA(Pro) + AMP + diphosphate. Its function is as follows. Catalyzes the attachment of proline to tRNA(Pro) in a two-step reaction: proline is first activated by ATP to form Pro-AMP and then transferred to the acceptor end of tRNA(Pro). As ProRS can inadvertently accommodate and process non-cognate amino acids such as alanine and cysteine, to avoid such errors it has two additional distinct editing activities against alanine. One activity is designated as 'pretransfer' editing and involves the tRNA(Pro)-independent hydrolysis of activated Ala-AMP. The other activity is designated 'posttransfer' editing and involves deacylation of mischarged Ala-tRNA(Pro). The misacylated Cys-tRNA(Pro) is not edited by ProRS. This chain is Proline--tRNA ligase, found in Streptococcus pyogenes serotype M28 (strain MGAS6180).